The chain runs to 185 residues: Ribosome-recycling factor (185 aa).

Belongs to the RRF family.

Its subcellular location is the cytoplasm. Its function is as follows. Responsible for the release of ribosomes from messenger RNA at the termination of protein biosynthesis. May increase the efficiency of translation by recycling ribosomes from one round of translation to another. The chain is Ribosome-recycling factor from Erwinia tasmaniensis (strain DSM 17950 / CFBP 7177 / CIP 109463 / NCPPB 4357 / Et1/99).